A 343-amino-acid polypeptide reads, in one-letter code: Putative kinase HI_0665 (343 aa).

Catalysis depends on Asp-209, which acts as the Proton acceptor.

Belongs to the HipA Ser/Thr kinase family.

The polypeptide is Putative kinase HI_0665 (Haemophilus influenzae (strain ATCC 51907 / DSM 11121 / KW20 / Rd)).